The sequence spans 340 residues: Beta-D-galactofuranosidase xynD (340 aa).

The N-terminal stretch at Met-1 to Ser-24 is a signal peptide. Asp-51 functions as the Proton acceptor in the catalytic mechanism. N-linked (GlcNAc...) asparagine glycans are attached at residues Asn-96 and Asn-165. Glu-222 serves as the catalytic Proton donor. Residues Asn-302 and Asn-328 are each glycosylated (N-linked (GlcNAc...) asparagine).

This sequence belongs to the glycosyl hydrolase 43 family.

It localises to the secreted. It functions in the pathway glycan degradation. Functionally, glycoside hydrolase family 43 beta-D-galactofuranosidase involved in the degradation of beta-galactofuranoside (Galf)-containing glycans such as galactomannan or O-glycans. Is not active on beta-1,5- or beta-1,6-linked beta-D-galactofuranose (Galf) residues. This chain is Beta-D-galactofuranosidase xynD, found in Aspergillus niger (strain ATCC MYA-4892 / CBS 513.88 / FGSC A1513).